Consider the following 164-residue polypeptide: Protein PPLZ02 (164 aa).

The segment at residues R7 to P64 is a DNA-binding region (AP2/ERF).

The protein localises to the nucleus. Essential for all lupin cells independent of the respective tissue. This is Protein PPLZ02 (PPLZ02) from Lupinus polyphyllus (Large-leaved lupine).